The sequence spans 273 residues: Protein GMH1 (273 aa).

The segment at 1-33 (MSYLPTYSNDLPAGPQGQRRRNNGNENDARQGY) is disordered. Ser-2 carries the N-acetylserine modification. Residues 2-89 (SYLPTYSNDL…QTKNQWARDD (88 aa)) lie on the Cytoplasmic side of the membrane. The helical transmembrane segment at 90 to 110 (PSFFIFQIALISLSSIIWSIY) threads the bilayer. Residues 111 to 134 (NSGFNNDSDMGALSIIGHFFKSLV) lie on the Lumenal side of the membrane. A helical membrane pass occupies residues 135–155 (MMVILDFFIFGFIMATIFYLL). Over 156–175 (LNRSHFKFKSSQNSVVEWAY) the chain is Cytoplasmic. Residues 176–196 (CFDVHCNSFLIILLCLYFIQF) traverse the membrane as a helical segment. Residues 197-216 (LLLPIINLQNWISLLIGNSL) lie on the Lumenal side of the membrane. The chain crosses the membrane as a helical span at residues 217 to 237 (YCFAIGHYFILTFYGYNQLPF). Residues 238-242 (LKNLN) lie on the Cytoplasmic side of the membrane. A helical transmembrane segment spans residues 243–263 (FILLPTLGLSIIYLISLFGID). Topologically, residues 264–273 (LSKKLSFYNY) are lumenal.

The protein belongs to the unc-50 family. As to quaternary structure, interacts with GEA1 and GEA2.

It is found in the golgi apparatus membrane. Its subcellular location is the endoplasmic reticulum membrane. The polypeptide is Protein GMH1 (GMH1) (Saccharomyces cerevisiae (strain ATCC 204508 / S288c) (Baker's yeast)).